A 492-amino-acid polypeptide reads, in one-letter code: Dipeptide and tripeptide permease A (492 aa).

Residues 1–20 are Cytoplasmic-facing; that stretch reads MSTANKHPEAASLNAFKQPR. Residues 21–43 traverse the membrane as a helical segment; it reads SFYLIFSIELWERFGYYGLQGIM. At 44–58 the chain is on the periplasmic side; it reads AVYLVKMLGMSEAQS. A helical transmembrane segment spans residues 59 to 79; the sequence is ITLFASFSALVYGLIAVGGWL. Topologically, residues 80 to 88 are cytoplasmic; that stretch reads GDKVLGTKR. The chain crosses the membrane as a helical span at residues 89–109; sequence VIVLGTLVLALGYALVAWSGH. A topological domain (periplasmic) is located at residue aspartate 110. A helical membrane pass occupies residues 111–131; the sequence is IAMIYFGMATIAVGNGLFKAN. Residues 132-152 lie on the Cytoplasmic side of the membrane; it reads PSSLLSTCYEKDDPRLDGAFT. The helical transmembrane segment at 153–173 threads the bilayer; that stretch reads MYYMAINIGSFFSMLATPWLA. Residues 174–178 lie on the Periplasmic side of the membrane; it reads AQFGW. Residues 179–199 form a helical membrane-spanning segment; it reads STAFGLSFVGMLITLVNFMFF. The Cytoplasmic segment spans residues 200–217; sequence RKWVKDHGSKPDFAPLNM. The helical transmembrane segment at 218–238 threads the bilayer; it reads GKLLVTLLGIAVMIAAATWLL. The Periplasmic portion of the chain corresponds to 239–245; that stretch reads HNQDIAR. A helical membrane pass occupies residues 246–266; the sequence is MVLGAVAVAIVVIFTKEALTL. Residues 267-273 lie on the Cytoplasmic side of the membrane; that stretch reads KGAARRK. The helical transmembrane segment at 274–294 threads the bilayer; it reads MIVAFLLMLEAIVFFVLYMQM. The Periplasmic segment spans residues 295-319; sequence PTSLNFFAIRNVEHSLLGIAFQPEQ. Residues 320-340 form a helical membrane-spanning segment; sequence FQALNPFWIMIFSPLLAALYN. Topologically, residues 341–351 are cytoplasmic; the sequence is KLGDRMPMPHK. A helical membrane pass occupies residues 352-372; sequence FALGMVLCSAAFLVLPLGASL. Topologically, residues 373-377 are periplasmic; it reads ANKMG. The chain crosses the membrane as a helical span at residues 378-398; it reads IVSVGWLVLSYALQSVGELMI. At 399-413 the chain is on the cytoplasmic side; it reads SGLGLAMVAQLVPQR. A helical membrane pass occupies residues 414-434; it reads LMGFIMGSWFLTTAGAAMVAG. At 435-458 the chain is on the periplasmic side; sequence KVANLMAVPENITNPLLSLHVYGD. The helical transmembrane segment at 459 to 479 threads the bilayer; that stretch reads IFFKIGITTGVIAVLMILAAP. Residues 480 to 492 lie on the Cytoplasmic side of the membrane; the sequence is LLNRMTQDEQPGV.

Belongs to the major facilitator superfamily. Proton-dependent oligopeptide transporter (POT/PTR) (TC 2.A.17) family. DtpA subfamily.

The protein localises to the cell inner membrane. Functionally, proton-dependent permease that transports di- and tripeptides. In Erwinia pyrifoliae (strain DSM 12163 / CIP 106111 / Ep16/96), this protein is Dipeptide and tripeptide permease A.